The sequence spans 190 residues: Iron-sulfur protein (190 aa).

The 4Fe-4S ferredoxin-type 1 domain occupies 8–36 (VIIYANPDHCLSCHSCELACAVAHSGGHD). [4Fe-4S] cluster contacts are provided by Cys17, Cys20, Cys23, Cys27, Cys65, Cys68, Cys73, Cys77, Cys96, Cys99, Cys102, Cys106, Cys133, Cys136, Cys150, and Cys154. 4Fe-4S ferredoxin-type domains follow at residues 87-116 (GQVQ…VRSE) and 133-164 (CDLC…MVDL).

Its function is as follows. The carbon monoxide dehydrogenase (CODH) oxidizes carbon monoxide coupled, via CooF, to the reduction of a hydrogen cation by a hydrogenase (probably CooH). CooF is required in stoichiometric amounts in vitro for anchoring CODH to the membrane as well as for conveying the electrons to the hydrogenase. The chain is Iron-sulfur protein (cooF) from Rhodospirillum rubrum.